Here is a 364-residue protein sequence, read N- to C-terminus: Long-wave-sensitive opsin 1 (364 aa).

The Extracellular portion of the chain corresponds to 1 to 52; sequence MAHAWGPQRLAGGQPQANFEESTQGSIFTYTNSNSTRDPFEGPNYHIAPRWV. O-linked (GlcNAc) serine glycosylation is present at S22. N-linked (GlcNAc...) asparagine glycosylation is present at N34. Residues 53 to 77 traverse the membrane as a helical segment; the sequence is YHLTSAWMVFVVIASVFTNGLVLAA. The Cytoplasmic segment spans residues 78-89; it reads TMRFKKLRHPLN. A helical membrane pass occupies residues 90-115; that stretch reads WILVNLAIADLAETIIASTISVVNQM. Over 116-129 the chain is Extracellular; it reads YGYFVLGHPLCVVE. C126 and C203 are disulfide-bonded. A helical membrane pass occupies residues 130–149; sequence GYTVSLCGITGLWSLAIISW. Over 150–168 the chain is Cytoplasmic; that stretch reads ERWMVVCKPFGNVRFDAKL. A helical membrane pass occupies residues 169 to 192; sequence AITGIAFSWIWAAVWTAPPIFGWS. Over 193 to 218 the chain is Extracellular; it reads RYWPHGLKTSCGPDVFSGSSYPGVQS. The helical transmembrane segment at 219–246 threads the bilayer; it reads YMIVLMITCCFIPLSVIILCYLQVWLAI. The Cytoplasmic segment spans residues 247–268; sequence RAVAKQQKESESTQKAEKEVTR. The helical transmembrane segment at 269-292 threads the bilayer; that stretch reads MVMVMIFAYCLCWGPYTFFACFAA. At 293 to 300 the chain is on the extracellular side; sequence AHPGYAFH. A helical transmembrane segment spans residues 301–325; that stretch reads PLVAALPAYFAKSATIYNPIIYVFM. Residue K312 is modified to N6-(retinylidene)lysine. Residues 326–364 are Cytoplasmic-facing; it reads NRQFRNCILQLFGKKVDDSSELSSVSKTEASSVSSVSPA.

This sequence belongs to the G-protein coupled receptor 1 family. Opsin subfamily. Phosphorylated on some or all of the serine and threonine residues present in the C-terminal region. As to expression, expressed in retina (at protein level). Expressed in cone and/or rod photoreceptor cells (at protein level).

The protein resides in the membrane. Its function is as follows. Visual pigments are the light-absorbing molecules that mediate vision. They consist of an apoprotein, opsin, covalently linked to cis-retinal. The sequence is that of Long-wave-sensitive opsin 1 (OPN1LW) from Bos taurus (Bovine).